A 322-amino-acid polypeptide reads, in one-letter code: Ribose-phosphate pyrophosphokinase 1 (322 aa).

ATP-binding positions include 39-41 (DGE) and 98-99 (RQ). Mg(2+)-binding residues include H132 and D173. The active site involves K196. D-ribose 5-phosphate contacts are provided by residues R198, D224, and 228–232 (DTAGT).

This sequence belongs to the ribose-phosphate pyrophosphokinase family. Class I subfamily. Homohexamer. It depends on Mg(2+) as a cofactor.

It localises to the cytoplasm. The catalysed reaction is D-ribose 5-phosphate + ATP = 5-phospho-alpha-D-ribose 1-diphosphate + AMP + H(+). The protein operates within metabolic intermediate biosynthesis; 5-phospho-alpha-D-ribose 1-diphosphate biosynthesis; 5-phospho-alpha-D-ribose 1-diphosphate from D-ribose 5-phosphate (route I): step 1/1. Functionally, involved in the biosynthesis of the central metabolite phospho-alpha-D-ribosyl-1-pyrophosphate (PRPP) via the transfer of pyrophosphoryl group from ATP to 1-hydroxyl of ribose-5-phosphate (Rib-5-P). In Streptococcus mutans serotype c (strain ATCC 700610 / UA159), this protein is Ribose-phosphate pyrophosphokinase 1.